The chain runs to 163 residues: Protein-export protein SecB (163 aa).

Belongs to the SecB family. Homotetramer, a dimer of dimers. One homotetramer interacts with 1 SecA dimer.

It localises to the cytoplasm. Its function is as follows. One of the proteins required for the normal export of preproteins out of the cell cytoplasm. It is a molecular chaperone that binds to a subset of precursor proteins, maintaining them in a translocation-competent state. It also specifically binds to its receptor SecA. The polypeptide is Protein-export protein SecB (Brucella canis (strain ATCC 23365 / NCTC 10854 / RM-666)).